Reading from the N-terminus, the 233-residue chain is 5'-methylthioadenosine/S-adenosylhomocysteine nucleosidase (233 aa).

E12 acts as the Proton acceptor in catalysis. Residues G78, I152, and 173–174 (ME) each bind substrate. Residue D197 is the Proton donor of the active site.

Belongs to the PNP/UDP phosphorylase family. MtnN subfamily. Homodimer.

It catalyses the reaction S-adenosyl-L-homocysteine + H2O = S-(5-deoxy-D-ribos-5-yl)-L-homocysteine + adenine. It carries out the reaction S-methyl-5'-thioadenosine + H2O = 5-(methylsulfanyl)-D-ribose + adenine. The enzyme catalyses 5'-deoxyadenosine + H2O = 5-deoxy-D-ribose + adenine. Its pathway is amino-acid biosynthesis; L-methionine biosynthesis via salvage pathway; S-methyl-5-thio-alpha-D-ribose 1-phosphate from S-methyl-5'-thioadenosine (hydrolase route): step 1/2. Its function is as follows. Catalyzes the irreversible cleavage of the glycosidic bond in both 5'-methylthioadenosine (MTA) and S-adenosylhomocysteine (SAH/AdoHcy) to adenine and the corresponding thioribose, 5'-methylthioribose and S-ribosylhomocysteine, respectively. Also cleaves 5'-deoxyadenosine, a toxic by-product of radical S-adenosylmethionine (SAM) enzymes, into 5-deoxyribose and adenine. Thus, is required for in vivo function of the radical SAM enzymes biotin synthase and lipoic acid synthase, that are inhibited by 5'-deoxyadenosine accumulation. This Yersinia pestis bv. Antiqua (strain Angola) protein is 5'-methylthioadenosine/S-adenosylhomocysteine nucleosidase.